Here is a 366-residue protein sequence, read N- to C-terminus: Sulfite reductase, dissimilatory-type subunit beta (366 aa).

Residues C140, C177, C178, C182, C220, C241, C244, and C247 each contribute to the [4Fe-4S] cluster site. C182 is a binding site for siroheme. The region spanning 232 to 262 (KTIKVDVEKCMYCGNCYTMCPGMPLFDPEND) is the 4Fe-4S ferredoxin-type domain.

Heterotetramer of two alpha and two beta subunits. The cofactor is [4Fe-4S] cluster. Siroheme serves as cofactor.

It localises to the membrane. It catalyses the reaction [DsrC protein]-trisulfide + NAD(+) + 3 H2O = [DsrC protein]-dithiol + sulfite + NADH + 3 H(+). Its function is as follows. Catalyzes the reduction of sulfite to sulfide. This is the terminal oxidation reaction in sulfate respiration. The protein is Sulfite reductase, dissimilatory-type subunit beta (dsrB) of Archaeoglobus fulgidus (strain ATCC 49558 / DSM 4304 / JCM 9628 / NBRC 100126 / VC-16).